We begin with the raw amino-acid sequence, 396 residues long: UPF0164 protein TP_0858 (396 aa).

The N-terminal stretch at 1–28 (MGTMIRHTFTHRCGALLCALALGSSTMA) is a signal peptide.

The protein belongs to the UPF0164 family.

This is UPF0164 protein TP_0858 from Treponema pallidum (strain Nichols).